The chain runs to 355 residues: Protein RecA (355 aa).

Residue 65–72 participates in ATP binding; the sequence is GPESSGKT.

It belongs to the RecA family.

The protein localises to the cytoplasm. Its function is as follows. Can catalyze the hydrolysis of ATP in the presence of single-stranded DNA, the ATP-dependent uptake of single-stranded DNA by duplex DNA, and the ATP-dependent hybridization of homologous single-stranded DNAs. It interacts with LexA causing its activation and leading to its autocatalytic cleavage. This is Protein RecA from Pseudomonas putida (strain GB-1).